Reading from the N-terminus, the 145-residue chain is NADH-quinone oxidoreductase subunit A (145 aa).

The next 3 membrane-spanning stretches (helical) occupy residues 14-34 (FAVFLLSALGLCVFMLTGGFL), 66-86 (FYLVAMFFVIFDVETLYLYAW), and 96-116 (VGFIEATIFILILLAGLVYLV).

The protein belongs to the complex I subunit 3 family. As to quaternary structure, NDH-1 is composed of 13 different subunits. Subunits NuoA, H, J, K, L, M, N constitute the membrane sector of the complex.

The protein resides in the cell inner membrane. It carries out the reaction a quinone + NADH + 5 H(+)(in) = a quinol + NAD(+) + 4 H(+)(out). NDH-1 shuttles electrons from NADH, via FMN and iron-sulfur (Fe-S) centers, to quinones in the respiratory chain. The immediate electron acceptor for the enzyme in this species is believed to be ubiquinone. Couples the redox reaction to proton translocation (for every two electrons transferred, four hydrogen ions are translocated across the cytoplasmic membrane), and thus conserves the redox energy in a proton gradient. This is NADH-quinone oxidoreductase subunit A from Sodalis glossinidius (strain morsitans).